Consider the following 445-residue polypeptide: Trigger factor (445 aa).

The 86-residue stretch at 162-247 folds into the PPIase FKBP-type domain; that stretch reads GDQVTIDAIG…IKAVHTAEPT (86 aa).

It belongs to the FKBP-type PPIase family. Tig subfamily.

It localises to the cytoplasm. The enzyme catalyses [protein]-peptidylproline (omega=180) = [protein]-peptidylproline (omega=0). Its function is as follows. Involved in protein export. Acts as a chaperone by maintaining the newly synthesized protein in an open conformation. Functions as a peptidyl-prolyl cis-trans isomerase. This Rickettsia conorii (strain ATCC VR-613 / Malish 7) protein is Trigger factor.